The chain runs to 157 residues: 2-C-methyl-D-erythritol 2,4-cyclodiphosphate synthase (157 aa).

The a divalent metal cation site is built by aspartate 8 and histidine 10. Residues 8 to 10 (DVH) and 34 to 35 (HS) contribute to the 4-CDP-2-C-methyl-D-erythritol 2-phosphate site. Histidine 42 contributes to the a divalent metal cation binding site. Residues 56-58 (DIG), 61-65 (FPDTD), 100-106 (AQRPKMA), 132-135 (TTEE), and phenylalanine 139 each bind 4-CDP-2-C-methyl-D-erythritol 2-phosphate.

This sequence belongs to the IspF family. Homotrimer. Requires a divalent metal cation as cofactor.

It catalyses the reaction 4-CDP-2-C-methyl-D-erythritol 2-phosphate = 2-C-methyl-D-erythritol 2,4-cyclic diphosphate + CMP. The protein operates within isoprenoid biosynthesis; isopentenyl diphosphate biosynthesis via DXP pathway; isopentenyl diphosphate from 1-deoxy-D-xylulose 5-phosphate: step 4/6. Its function is as follows. Involved in the biosynthesis of isopentenyl diphosphate (IPP) and dimethylallyl diphosphate (DMAPP), two major building blocks of isoprenoid compounds. Catalyzes the conversion of 4-diphosphocytidyl-2-C-methyl-D-erythritol 2-phosphate (CDP-ME2P) to 2-C-methyl-D-erythritol 2,4-cyclodiphosphate (ME-CPP) with a corresponding release of cytidine 5-monophosphate (CMP). This is 2-C-methyl-D-erythritol 2,4-cyclodiphosphate synthase from Trichlorobacter lovleyi (strain ATCC BAA-1151 / DSM 17278 / SZ) (Geobacter lovleyi).